The sequence spans 376 residues: Putative glutamate--cysteine ligase 2 (376 aa).

This sequence belongs to the glutamate--cysteine ligase type 2 family. YbdK subfamily.

The catalysed reaction is L-cysteine + L-glutamate + ATP = gamma-L-glutamyl-L-cysteine + ADP + phosphate + H(+). Functionally, ATP-dependent carboxylate-amine ligase which exhibits weak glutamate--cysteine ligase activity. The chain is Putative glutamate--cysteine ligase 2 from Corynebacterium glutamicum (strain R).